Here is a 555-residue protein sequence, read N- to C-terminus: Glutamine--tRNA ligase (555 aa).

The short motif at 35-45 (PEPNGYLHIGH) is the 'HIGH' region element. ATP-binding positions include 36–38 (EPN) and 42–48 (HIGHAKS). Residues D68 and Y213 each coordinate L-glutamine. ATP contacts are provided by residues T232 and 262 to 263 (RL). The 'KMSKS' region motif lies at 269-273 (ITSKR).

It belongs to the class-I aminoacyl-tRNA synthetase family. Monomer.

The protein resides in the cytoplasm. The catalysed reaction is tRNA(Gln) + L-glutamine + ATP = L-glutaminyl-tRNA(Gln) + AMP + diphosphate. This chain is Glutamine--tRNA ligase, found in Stutzerimonas stutzeri (strain A1501) (Pseudomonas stutzeri).